Reading from the N-terminus, the 205-residue chain is Outer-membrane lipoprotein carrier protein (205 aa).

A signal peptide spans 1 to 22 (MKKIVIVISILLTSFLSSAVSA).

Belongs to the LolA family. Monomer.

It localises to the periplasm. Participates in the translocation of lipoproteins from the inner membrane to the outer membrane. Only forms a complex with a lipoprotein if the residue after the N-terminal Cys is not an aspartate (The Asp acts as a targeting signal to indicate that the lipoprotein should stay in the inner membrane). This Psychromonas ingrahamii (strain DSM 17664 / CCUG 51855 / 37) protein is Outer-membrane lipoprotein carrier protein.